The sequence spans 410 residues: Phosphoglycerate kinase (410 aa).

Substrate-binding positions include 19–21, Arg-34, 57–60, Arg-114, and Arg-154; these read DLN and HQGK. Residues Glu-332 and 358 to 361 contribute to the ATP site; that span reads GGHS.

The protein belongs to the phosphoglycerate kinase family. In terms of assembly, homodimer.

Its subcellular location is the cytoplasm. It carries out the reaction (2R)-3-phosphoglycerate + ATP = (2R)-3-phospho-glyceroyl phosphate + ADP. The protein operates within carbohydrate degradation; glycolysis; pyruvate from D-glyceraldehyde 3-phosphate: step 2/5. In Pyrococcus furiosus (strain ATCC 43587 / DSM 3638 / JCM 8422 / Vc1), this protein is Phosphoglycerate kinase (pgk).